Here is a 207-residue protein sequence, read N- to C-terminus: Thymidylate kinase (207 aa).

7–14 (GCEGTGKT) is a binding site for ATP.

It belongs to the thymidylate kinase family.

The enzyme catalyses dTMP + ATP = dTDP + ADP. Phosphorylation of dTMP to form dTDP in both de novo and salvage pathways of dTTP synthesis. In Aster yellows witches'-broom phytoplasma (strain AYWB), this protein is Thymidylate kinase.